A 201-amino-acid polypeptide reads, in one-letter code: Ras-related protein Rab-1B (201 aa).

Methionine 1 bears the N-acetylmethionine mark. 13 residues coordinate GTP: serine 17, glycine 18, valine 19, glycine 20, lysine 21, serine 22, cysteine 23, tyrosine 33, threonine 34, glutamate 35, serine 36, serine 39, and threonine 40. Serine 22 contributes to the Mg(2+) binding site. Residues 30 to 45 carry the Switch 1 motif; sequence DDTYTESYISTIGVDF. The Mg(2+) site is built by threonine 40 and aspartate 63. Residues 64–83 form a switch 2 region; required for interaction with REP1/CHM region; that stretch reads TAGQERFRTITSSYYRGAHG. The short motif at 65-80 is the Switch 2 element; that stretch reads AGQERFRTITSSYYRG. A GTP-binding site is contributed by glycine 66. Serine 76 carries the (Microbial infection) O-(2-cholinephosphoryl)serine modification. The residue at position 77 (tyrosine 77) is a (Microbial infection) O-AMP-tyrosine. Positions 121, 122, 124, 151, 152, and 153 each coordinate GTP. Residues 174–201 are disordered; that stretch reads GPGAASGGERPNLKIDSTPVKPAGGGCC. S-geranylgeranyl cysteine attachment occurs at residues cysteine 200 and cysteine 201. Residue cysteine 201 is modified to Cysteine methyl ester.

It belongs to the small GTPase superfamily. Rab family. In terms of assembly, interacts with MICAL1 and MICAL2. Interacts (in GTP-bound form) with MICALCL, MICAL1 and MILCAL3. Interacts with GDI1; the interaction requires the GDP-bound state. Interacts with CHM/REP1; the interaction requires the GDP-bound form and is necessary for prenylation by GGTase II. Interacts with RabGAP TBC1D20. Interacts (in GDP-bound form) with lipid phosphatase MTMR6 (via GRAM domain); the interaction regulates MTMR6 recruitment to the endoplasmic reticulum-Golgi intermediate compartment. Interacts (in GDP-bound form) with lipid phosphatase MTMR7. (Microbial infection) Interacts with L.pneumophila AnkX. Interacts with L.pneumophila Lem3. Interacts with L.pneumophila SidD. Interacts with L.pneumophila DrrA. Mg(2+) serves as cofactor. Post-translationally, prenylated; by GGTase II, only after interaction of the substrate with Rab escort protein 1 (REP1). In terms of processing, (Microbial infection) AMPylation at Tyr-77 by L.pneumophila DrrA occurs in the switch 2 region and leads to moderate inactivation of the GTPase activity. It appears to prolong the lifetime of the GTP state of RAB1B by restricting access of GTPase effectors to switch 2 and blocking effector-stimulated GTP hydrolysis, thereby rendering RAB1B constitutively active. It is later de-AMPylated by L.pneumophila SidD, releasing RAB1B from bacterial phagosomes. (Microbial infection) Phosphocholinated at Ser-76 by L.pneumophila AnkX, leading to displace GDP dissociation inhibitors (GDI). Both GDP-bound and GTP-bound forms can be phosphocholinated. Dephosphocholinated by L.pneumophila Lem3, restoring accessibility to L.pneumophila GTPase effector LepB. Post-translationally, (Microbial infection) Glycosylated by S.typhimurium protein Ssek3: arginine GlcNAcylation prevents GTPase activity, thereby disrupting vesicular protein transport from the endoplasmic reticulum (ER) to the Golgi compartment.

The protein resides in the cytoplasm. It is found in the membrane. Its subcellular location is the preautophagosomal structure membrane. It localises to the perinuclear region. The enzyme catalyses GTP + H2O = GDP + phosphate + H(+). Regulated by guanine nucleotide exchange factors (GEFs) which promote the exchange of bound GDP for free GTP. Regulated by GTPase activating proteins (GAPs) including TBC1D20 which increases the GTP hydrolysis activity. Inhibited by GDP dissociation inhibitors (GDIs). In terms of biological role, the small GTPases Rab are key regulators of intracellular membrane trafficking, from the formation of transport vesicles to their fusion with membranes. Rabs cycle between an inactive GDP-bound form and an active GTP-bound form that is able to recruit to membranes different set of downstream effectors directly responsible for vesicle formation, movement, tethering and fusion. Plays a role in the initial events of the autophagic vacuole development which take place at specialized regions of the endoplasmic reticulum. Regulates vesicular transport between the endoplasmic reticulum and successive Golgi compartments. Required to modulate the compacted morphology of the Golgi. Promotes the recruitment of lipid phosphatase MTMR6 to the endoplasmic reticulum-Golgi intermediate compartment. This Homo sapiens (Human) protein is Ras-related protein Rab-1B.